A 187-amino-acid polypeptide reads, in one-letter code: Basic helix-loop-helix transcription factor scleraxis (187 aa).

Disordered stretches follow at residues 21 to 83 (LSED…TNSV) and 140 to 163 (AFFH…QPKQ). Residues 34–43 (SDEKPFHLDA) show a composition bias toward basic and acidic residues. Over residues 50-72 (AGKRRSGKKAGRLHREPRQRHTA) the composition is skewed to basic residues. A bHLH domain is found at 67 to 119 (RQRHTANARERDRTNSVNTAFTALRTLIPTEPADRKLSKIETLRLASSYISHL).

In terms of assembly, efficient DNA binding requires dimerization with another bHLH protein. Dimerizes and binds the E-box consensus sequence with E12. In terms of tissue distribution, expressed in the intersomitic, the superficial proximomedial limb mesenchyme and the subectodermal mesenchyme.

It is found in the nucleus. Functionally, plays an early essential role in mesoderm formation, as well as a later role in formation of somite-derived chondrogenic lineages. The sequence is that of Basic helix-loop-helix transcription factor scleraxis (SCX) from Gallus gallus (Chicken).